Reading from the N-terminus, the 445-residue chain is 3-phosphoshikimate 1-carboxyvinyltransferase (445 aa).

The disordered stretch occupies residues 1–25; it reads MSHSDQTSPLEARKSAALSGTARVP. 3 residues coordinate 3-phosphoshikimate: Lys-28, Ser-29, and Arg-33. Residue Lys-28 coordinates phosphoenolpyruvate. The phosphoenolpyruvate site is built by Gly-101 and Arg-129. The 3-phosphoshikimate site is built by Ser-175, Gln-177, Asp-328, and Lys-355. Phosphoenolpyruvate is bound at residue Gln-177. Asp-328 acts as the Proton acceptor in catalysis. Residues Arg-359 and Arg-402 each contribute to the phosphoenolpyruvate site.

Belongs to the EPSP synthase family. As to quaternary structure, monomer.

The protein resides in the cytoplasm. It catalyses the reaction 3-phosphoshikimate + phosphoenolpyruvate = 5-O-(1-carboxyvinyl)-3-phosphoshikimate + phosphate. The protein operates within metabolic intermediate biosynthesis; chorismate biosynthesis; chorismate from D-erythrose 4-phosphate and phosphoenolpyruvate: step 6/7. Functionally, catalyzes the transfer of the enolpyruvyl moiety of phosphoenolpyruvate (PEP) to the 5-hydroxyl of shikimate-3-phosphate (S3P) to produce enolpyruvyl shikimate-3-phosphate and inorganic phosphate. The polypeptide is 3-phosphoshikimate 1-carboxyvinyltransferase (Rhodopseudomonas palustris (strain BisB5)).